Consider the following 900-residue polypeptide: Alanine--tRNA ligase (900 aa).

Positions 567, 571, 671, and 675 each coordinate Zn(2+).

It belongs to the class-II aminoacyl-tRNA synthetase family. Requires Zn(2+) as cofactor.

The protein resides in the cytoplasm. It catalyses the reaction tRNA(Ala) + L-alanine + ATP = L-alanyl-tRNA(Ala) + AMP + diphosphate. In terms of biological role, catalyzes the attachment of alanine to tRNA(Ala) in a two-step reaction: alanine is first activated by ATP to form Ala-AMP and then transferred to the acceptor end of tRNA(Ala). Also edits incorrectly charged Ser-tRNA(Ala) and Gly-tRNA(Ala) via its editing domain. The protein is Alanine--tRNA ligase of Mycoplasma pneumoniae (strain ATCC 29342 / M129 / Subtype 1) (Mycoplasmoides pneumoniae).